Here is a 317-residue protein sequence, read N- to C-terminus: Probable cell division protein WhiA (317 aa).

The segment at residues 281–314 (SLKELGQMLDPPVGKSGINHRLRRIEKIAEELRK) is a DNA-binding region (H-T-H motif).

This sequence belongs to the WhiA family.

Involved in cell division and chromosome segregation. The chain is Probable cell division protein WhiA from Clostridium novyi (strain NT).